The chain runs to 310 residues: Zinc-finger homeodomain protein 3 (310 aa).

The interval 1 to 64 (MEIASQEDPI…GLGKNHDHSH (64 aa)) is disordered. A compositionally biased stretch (polar residues) spans 39 to 56 (LNITTSNPLLVSSNSNGL). The ZF-HD dimerization-type; degenerate zinc finger occupies 87-136 (YKECLKNHAATMGGNAIDGCGEFMPSGEEGSIEALTCSVCNCHRNFHRRE). 2 disordered regions span residues 184–220 (TAGS…YGHN) and 281–310 (LSKK…STNP). Positions 190 to 199 (ESEDLMEEEG) are enriched in acidic residues. A DNA-binding region (homeobox) is located at residues 222–285 (KKRFRTKFTQ…NNKQNLSKKS (64 aa)). The span at 281 to 291 (LSKKSNNVSNN) shows a compositional bias: low complexity. The span at 292–310 (VDLSAGNNDITENLASTNP) shows a compositional bias: polar residues.

Homo- and heterodimer with other ZFHD proteins. Interacts with MIF2 and MIF3; these interactions prevent nuclear localization and DNA-binding to inhibit transcription regulation activity. Binds to ZHD1, ZHD2 and ZHD11. Interacts with HIPP30. Interacts with KIN10, KIN11 and FLZ8. Mostly expressed in flowers and inflorescence.

Its subcellular location is the nucleus. In terms of biological role, putative transcription factor. This chain is Zinc-finger homeodomain protein 3 (ZHD3), found in Arabidopsis thaliana (Mouse-ear cress).